Consider the following 445-residue polypeptide: Methylenetetrahydrofolate--tRNA-(uracil-5-)-methyltransferase TrmFO (445 aa).

10–15 (GGGLSG) serves as a coordination point for FAD.

Belongs to the MnmG family. TrmFO subfamily. FAD serves as cofactor.

The protein localises to the cytoplasm. The catalysed reaction is uridine(54) in tRNA + (6R)-5,10-methylene-5,6,7,8-tetrahydrofolate + NADH + H(+) = 5-methyluridine(54) in tRNA + (6S)-5,6,7,8-tetrahydrofolate + NAD(+). It carries out the reaction uridine(54) in tRNA + (6R)-5,10-methylene-5,6,7,8-tetrahydrofolate + NADPH + H(+) = 5-methyluridine(54) in tRNA + (6S)-5,6,7,8-tetrahydrofolate + NADP(+). Functionally, catalyzes the folate-dependent formation of 5-methyl-uridine at position 54 (M-5-U54) in all tRNAs. In Lawsonia intracellularis (strain PHE/MN1-00), this protein is Methylenetetrahydrofolate--tRNA-(uracil-5-)-methyltransferase TrmFO.